Reading from the N-terminus, the 327-residue chain is Lipoyl synthase (327 aa).

[4Fe-4S] cluster is bound by residues cysteine 75, cysteine 80, cysteine 86, cysteine 101, cysteine 105, cysteine 108, and serine 315. The Radical SAM core domain occupies 87–304 (FGNGTATFMI…EEEAYKMGFS (218 aa)).

It belongs to the radical SAM superfamily. Lipoyl synthase family. [4Fe-4S] cluster serves as cofactor.

The protein resides in the cytoplasm. It carries out the reaction [[Fe-S] cluster scaffold protein carrying a second [4Fe-4S](2+) cluster] + N(6)-octanoyl-L-lysyl-[protein] + 2 oxidized [2Fe-2S]-[ferredoxin] + 2 S-adenosyl-L-methionine + 4 H(+) = [[Fe-S] cluster scaffold protein] + N(6)-[(R)-dihydrolipoyl]-L-lysyl-[protein] + 4 Fe(3+) + 2 hydrogen sulfide + 2 5'-deoxyadenosine + 2 L-methionine + 2 reduced [2Fe-2S]-[ferredoxin]. Its pathway is protein modification; protein lipoylation via endogenous pathway; protein N(6)-(lipoyl)lysine from octanoyl-[acyl-carrier-protein]: step 2/2. Catalyzes the radical-mediated insertion of two sulfur atoms into the C-6 and C-8 positions of the octanoyl moiety bound to the lipoyl domains of lipoate-dependent enzymes, thereby converting the octanoylated domains into lipoylated derivatives. The protein is Lipoyl synthase of Variovorax paradoxus (strain S110).